The sequence spans 68 residues: Agnoprotein (68 aa).

Topologically, residues 1 to 24 (MVLRQLSRQASVKVGKTWTGTKRR) are cytoplasmic. Ser7 and Ser11 each carry phosphoserine; by host. At Thr21 the chain carries Phosphothreonine; by host. A helical; Signal-anchor for type II membrane protein transmembrane segment spans residues 25–41 (AQRIFIFILELLLDFCR). Residues 42-68 (GEDSVDGKKKKDSLTDKTETVTEKKES) are Extracellular-facing. The tract at residues 44–68 (DSVDGKKKKDSLTDKTETVTEKKES) is disordered.

The protein belongs to the polyomavirus agnoprotein family. Homooligomer. Interacts with VP1. Interacts with large T antigen; this interaction may impact upon the activity of T-antigen on the control of viral gene transcription and replication. Interacts with small t antigen. Interacts with host CBX5; this interaction induces the dissociation of CBX5 from LBR, resulting in destabilization of the nuclear envelope. In terms of processing, phosphorylated by host PKC. Phosphorylation alters the stability and may also have an impact on the subcellular location.

The protein resides in the host cytoplasm. Its subcellular location is the host nucleus membrane. It is found in the host rough endoplasmic reticulum membrane. It localises to the host cell membrane. In terms of biological role, alters the structure of the nuclear envelope by interacting with host CBX5 and disrupting CBX5 association with LBR. Involved in the perinuclear-nuclear localization of the capsid protein VP1 during virion assembly and maturation. Plays an important role in the release of progeny virions from infected cells and in viral propagation, probably by acting as a viral ionic channel in the host plasma membrane. Allows influx of extracellular calcium ions in the host cell. May contribute to viral genome transcription and translation of viral late proteins. This is Agnoprotein from Simian virus 12 (strain wt100) (SV-12).